Consider the following 293-residue polypeptide: Bis(5'-nucleosyl)-tetraphosphatase, symmetrical (293 aa).

Belongs to the Ap4A hydrolase family.

The enzyme catalyses P(1),P(4)-bis(5'-adenosyl) tetraphosphate + H2O = 2 ADP + 2 H(+). Its function is as follows. Hydrolyzes diadenosine 5',5'''-P1,P4-tetraphosphate to yield ADP. This Pseudomonas fluorescens (strain Pf0-1) protein is Bis(5'-nucleosyl)-tetraphosphatase, symmetrical.